Consider the following 141-residue polypeptide: UPF0310 protein SSA_0254 (141 aa).

This sequence belongs to the UPF0310 family.

This chain is UPF0310 protein SSA_0254, found in Streptococcus sanguinis (strain SK36).